Consider the following 293-residue polypeptide: RNA pseudouridylate synthase domain-containing protein 1 (293 aa).

Residue aspartate 67 is part of the active site.

The protein belongs to the pseudouridine synthase RluA family.

The protein is RNA pseudouridylate synthase domain-containing protein 1 (rpusd1) of Danio rerio (Zebrafish).